A 706-amino-acid chain; its full sequence is Probable E3 ubiquitin ligase complex SCF subunit sconB (706 aa).

Residues 1–12 show a composition bias toward basic and acidic residues; that stretch reads MQSDDRSVREGS. Disordered stretches follow at residues 1–43 and 56–76; these read MQSD…LLQQ and TAEEIDTETDSNHRRPHSFGA. The span at 34-43 shows a compositional bias: low complexity; it reads QQQQQQLLQQ. In terms of domain architecture, F-box spans 203 to 249; it reads IDFLTALPPEISFKILCYLDTTSLCKAAQVSSRWRALADDDVVWHRM. 7 WD repeats span residues 377–414, 417–456, 458–494, 496–537, 589–632, 635–672, and 675–706; these read GHTNGVMCLQFEDNILATGSYDATIKIWDTETGEELRT, GHQSGIRCLQFDDTKLISGSMDRSLKVWNWRTGECISTYT, HRGGVIGLHFDATILASASVDKTVKIWNFEDKSTFLL, GHTD…RTFH, ATET…CLRT, GHLEGVWALGADTLRIVSGAEDRMVKIWDPRTGKCERT, and GHSGPVTCIGLGDSRFATGSEDCEVRMYSFRN.

The protein belongs to the WD repeat MET30/SCONB/SCON-2 family. As to quaternary structure, component of the SCF(sconB) E3 ubiquitin ligase complex.

It participates in protein modification; protein ubiquitination. In terms of biological role, component of the SCF(sconB) E3 ubiquitin ligase complex involved in the regulation of sulfur metabolite repression, probably by mediating the inactivation or degradation of the metR transcription factor. The chain is Probable E3 ubiquitin ligase complex SCF subunit sconB (sconB) from Aspergillus flavus (strain ATCC 200026 / FGSC A1120 / IAM 13836 / NRRL 3357 / JCM 12722 / SRRC 167).